A 254-amino-acid polypeptide reads, in one-letter code: Imidazole glycerol phosphate synthase subunit HisF (254 aa).

Catalysis depends on residues aspartate 12 and aspartate 131.

It belongs to the HisA/HisF family. As to quaternary structure, heterodimer of HisH and HisF.

Its subcellular location is the cytoplasm. The enzyme catalyses 5-[(5-phospho-1-deoxy-D-ribulos-1-ylimino)methylamino]-1-(5-phospho-beta-D-ribosyl)imidazole-4-carboxamide + L-glutamine = D-erythro-1-(imidazol-4-yl)glycerol 3-phosphate + 5-amino-1-(5-phospho-beta-D-ribosyl)imidazole-4-carboxamide + L-glutamate + H(+). It functions in the pathway amino-acid biosynthesis; L-histidine biosynthesis; L-histidine from 5-phospho-alpha-D-ribose 1-diphosphate: step 5/9. Its function is as follows. IGPS catalyzes the conversion of PRFAR and glutamine to IGP, AICAR and glutamate. The HisF subunit catalyzes the cyclization activity that produces IGP and AICAR from PRFAR using the ammonia provided by the HisH subunit. This is Imidazole glycerol phosphate synthase subunit HisF from Corynebacterium aurimucosum (strain ATCC 700975 / DSM 44827 / CIP 107346 / CN-1) (Corynebacterium nigricans).